Here is a 359-residue protein sequence, read N- to C-terminus: Protein Wnt-9b (359 aa).

A signal peptide spans 1 to 23; the sequence is MRPAPALALAALCLLVLPAAAAA. Disulfide bonds link Cys91-Cys102, Cys137-Cys145, Cys147-Cys164, Cys212-Cys226, Cys214-Cys221, Cys293-Cys318, Cys307-Cys313, Cys317-Cys357, Cys333-Cys348, Cys335-Cys345, and Cys340-Cys341. An N-linked (GlcNAc...) asparagine glycan is attached at Asn101. Residue Ser218 is the site of O-palmitoleoyl serine; by PORCN attachment.

Belongs to the Wnt family. In terms of assembly, forms a soluble 1:1 complex with AFM; this prevents oligomerization and is required for prolonged biological activity. The complex with AFM may represent the physiological form in body fluids. Component of the Wnt-Fzd-LRP5-LRP6 signaling complex that contains a WNT protein, a FZD protein and LRP5 or LRP6. Interacts directly in the complex with LRP6. Interacts with PKD1 (via extracellular domain). In terms of processing, palmitoleoylation is required for efficient binding to frizzled receptors. Depalmitoleoylation leads to Wnt signaling pathway inhibition.

The protein resides in the secreted. It localises to the extracellular space. Its subcellular location is the extracellular matrix. Its function is as follows. Ligand for members of the frizzled family of seven transmembrane receptors. Functions in the canonical Wnt/beta-catenin signaling pathway. Required for normal embryonic kidney development, and for normal development of the urogenital tract, including uterus and part of the oviduct and the upper vagina in females, and epididymis and vas deferens in males. Activates a signaling cascade in the metanephric mesenchyme that induces tubulogenesis. Acts upstream of WNT4 in the signaling pathways that mediate development of kidney tubules and the Muellerian ducts. Plays a role in cranofacial development and is required for normal fusion of the palate during embryonic development. In Mus musculus (Mouse), this protein is Protein Wnt-9b (Wnt9b).